Here is a 348-residue protein sequence, read N- to C-terminus: Phosphate acyltransferase (348 aa).

The protein belongs to the PlsX family. As to quaternary structure, homodimer. Probably interacts with PlsY.

It localises to the cytoplasm. The enzyme catalyses a fatty acyl-[ACP] + phosphate = an acyl phosphate + holo-[ACP]. It participates in lipid metabolism; phospholipid metabolism. Functionally, catalyzes the reversible formation of acyl-phosphate (acyl-PO(4)) from acyl-[acyl-carrier-protein] (acyl-ACP). This enzyme utilizes acyl-ACP as fatty acyl donor, but not acyl-CoA. The chain is Phosphate acyltransferase from Pectobacterium atrosepticum (strain SCRI 1043 / ATCC BAA-672) (Erwinia carotovora subsp. atroseptica).